An 834-amino-acid polypeptide reads, in one-letter code: Protein translocase subunit SecA (834 aa).

ATP-binding positions include Gln85, 103–107 (GEGKT), and Asp491. Zn(2+) contacts are provided by Cys818, Cys820, Cys829, and Cys830.

Belongs to the SecA family. In terms of assembly, monomer and homodimer. Part of the essential Sec protein translocation apparatus which comprises SecA, SecYEG and auxiliary proteins SecDF. Other proteins may also be involved. The cofactor is Zn(2+).

The protein localises to the cell membrane. It is found in the cytoplasm. It carries out the reaction ATP + H2O + cellular proteinSide 1 = ADP + phosphate + cellular proteinSide 2.. Part of the Sec protein translocase complex. Interacts with the SecYEG preprotein conducting channel. Has a central role in coupling the hydrolysis of ATP to the transfer of proteins into and across the cell membrane, serving as an ATP-driven molecular motor driving the stepwise translocation of polypeptide chains across the membrane. In Clostridium kluyveri (strain ATCC 8527 / DSM 555 / NBRC 12016 / NCIMB 10680 / K1), this protein is Protein translocase subunit SecA.